Here is a 377-residue protein sequence, read N- to C-terminus: Nitric oxide reductase FlRd-NAD(+) reductase (377 aa).

Belongs to the FAD-dependent oxidoreductase family. FAD is required as a cofactor.

It is found in the cytoplasm. The enzyme catalyses 2 reduced [nitric oxide reductase rubredoxin domain] + NAD(+) + H(+) = 2 oxidized [nitric oxide reductase rubredoxin domain] + NADH. It participates in nitrogen metabolism; nitric oxide reduction. Functionally, one of at least two accessory proteins for anaerobic nitric oxide (NO) reductase. Reduces the rubredoxin moiety of NO reductase. The sequence is that of Nitric oxide reductase FlRd-NAD(+) reductase from Escherichia coli (strain SE11).